A 145-amino-acid chain; its full sequence is Lipoprotein signal peptidase (145 aa).

Helical transmembrane passes span 1–21 (MVYI…LLVM), 57–77 (YLFI…YYKT), and 79–99 (GSGM…GNLI). Catalysis depends on residues aspartate 109 and aspartate 123. A helical membrane pass occupies residues 115–135 (IWPVFNLADSSVVIGAALLIL).

The protein belongs to the peptidase A8 family.

It localises to the cell inner membrane. It carries out the reaction Release of signal peptides from bacterial membrane prolipoproteins. Hydrolyzes -Xaa-Yaa-Zaa-|-(S,diacylglyceryl)Cys-, in which Xaa is hydrophobic (preferably Leu), and Yaa (Ala or Ser) and Zaa (Gly or Ala) have small, neutral side chains.. The protein operates within protein modification; lipoprotein biosynthesis (signal peptide cleavage). In terms of biological role, this protein specifically catalyzes the removal of signal peptides from prolipoproteins. In Halothermothrix orenii (strain H 168 / OCM 544 / DSM 9562), this protein is Lipoprotein signal peptidase.